Consider the following 633-residue polypeptide: MSETPRIQLLSPRLANQIAAGEVVERPASVAKELLENSLDAGSRRIDVEVEQGGIKLLRVRDDGRGIPADDLPLALARHATSKIRELEDLERVMSLGFRGEALASISSVARLTMTSRTADAGEAWQVETEGRDMQPRVQPAAHPVGTSVEVRDLFFNTPARRKFLRAEKTEFDHLQEVIKRLALARFDVAFHLRHNGKTIFALHEARDELARARRVGAVCGQAFLEQALPIEVERNGLHLWGWVGLPTFSRSQPDLQYFYVNGRMVRDKLVAHAVRQAYRDVLYNGRHPTFVLFFEVDPAVVDVNVHPTKHEVRFRDSRMVHDFLYGTLHRALGEVRPDDQLAPPGATSLTEPRPTGAAAGEFGPQGEMRLAESVLESPAARVGWSGGSSASGGSSGYSAYTRPEAPPSLAEAGGAYKAYFAPLPAGEAPAALPESAQDIPPLGYALAQLKGIYILAENAHGLVLVDMHAAHERITYERLKVAMASEGLRGQPLLVPESIAVSEREADCAEEHSSWFQRLGFELQRLGPESLAIRQIPALLKQAEATQLVRDVIADLLEYGTSDRIQAHLNELLGTMACHGAVRANRRLTLPEMNALLRDMEITERSGQCNHGRPTWTQLGLDELDKLFLRGR.

Disordered regions lie at residues 337–364 (RPDD…GEFG) and 383–405 (VGWS…TRPE). Over residues 385–396 (WSGGSSASGGSS) the composition is skewed to gly residues.

It belongs to the DNA mismatch repair MutL/HexB family.

Its function is as follows. This protein is involved in the repair of mismatches in DNA. It is required for dam-dependent methyl-directed DNA mismatch repair. May act as a 'molecular matchmaker', a protein that promotes the formation of a stable complex between two or more DNA-binding proteins in an ATP-dependent manner without itself being part of a final effector complex. This chain is DNA mismatch repair protein MutL, found in Pseudomonas aeruginosa (strain UCBPP-PA14).